Here is a 42-residue protein sequence, read N- to C-terminus: Crotamine Ile-19 (42 aa).

Intrachain disulfides connect Cys-4-Cys-36, Cys-11-Cys-30, and Cys-18-Cys-37.

It belongs to the crotamine-myotoxin family. In terms of assembly, monomer. Expressed by the venom gland.

It is found in the secreted. Cationic peptide that possesses multiple functions. It acts as a cell-penetrating peptide (CPP), and as a potent voltage-gated potassium channel (Kv) inhibitor, it induces severe muscle necrosis by a non-enzymatic mechanism and exhibits antimicrobial activities. It also elicits a short-lasting hyperextension of the hind limb. It does not cause observable tissue damage (whereas the whole venom causes severe myonecrosis accompanied by edema and hemorrhage). This chain is Crotamine Ile-19, found in Crotalus durissus ruruima (South American rattlesnake).